The chain runs to 362 residues: Glutamine synthetase (362 aa).

The GS beta-grasp domain maps to 26 to 107; it reads LIAEYIWIDS…VLSECWNADG (82 aa). Positions 114 to 362 constitute a GS catalytic domain; that stretch reads HRHEAAKLME…METCFGAVSE (249 aa).

The protein belongs to the glutamine synthetase family. As to quaternary structure, homooctamer.

The protein resides in the cytoplasm. The enzyme catalyses L-glutamate + NH4(+) + ATP = L-glutamine + ADP + phosphate + H(+). The chain is Glutamine synthetase (gln-1) from Neurospora crassa (strain ATCC 24698 / 74-OR23-1A / CBS 708.71 / DSM 1257 / FGSC 987).